The chain runs to 156 residues: Glutamate-rich protein 2 (156 aa).

2 disordered regions span residues 29-66 (LQDI…TQAP) and 116-156 (EKTQ…EDGS). 2 stretches are compositionally biased toward acidic residues: residues 39-56 (SAED…DDED) and 140-156 (SDEE…EDGS).

The chain is Glutamate-rich protein 2 (ERICH2) from Homo sapiens (Human).